Reading from the N-terminus, the 325-residue chain is MQRHLISAADLTRDDAVHLLDTAEEMARVADRPIKKLPTLRGRTVVNLFFEDSTRTRISFEAAEKRLSADVINFTAKGSSVSKGESLKDTAQTLEAMGVDAVVIRHGASGAPYRLATSGWIDAVVINAGDGTHQHPTQALLDAFTMRRRLVGRDAGLGRDLAGKRITLVGDILHSRVARSNVDLLHTLGAEVTLVAPPTLLPVGIESWPCEVAYDLDSTLPKSDAVMMLRVQRERMNAAFFPTEREYSRRYGLNGDRMAKMPEHAIVMHPGPMVRGMEITAEVADSDRCTAIEQVTNGVSIRMAVLYLLLGGNEPAVSHTRIEEK.

2 residues coordinate carbamoyl phosphate: R55 and T56. K83 provides a ligand contact to L-aspartate. The carbamoyl phosphate site is built by R105, H135, and Q138. Positions 176 and 230 each coordinate L-aspartate. Positions 271 and 272 each coordinate carbamoyl phosphate.

This sequence belongs to the aspartate/ornithine carbamoyltransferase superfamily. ATCase family. As to quaternary structure, heterododecamer (2C3:3R2) of six catalytic PyrB chains organized as two trimers (C3), and six regulatory PyrI chains organized as three dimers (R2).

It catalyses the reaction carbamoyl phosphate + L-aspartate = N-carbamoyl-L-aspartate + phosphate + H(+). It participates in pyrimidine metabolism; UMP biosynthesis via de novo pathway; (S)-dihydroorotate from bicarbonate: step 2/3. Its function is as follows. Catalyzes the condensation of carbamoyl phosphate and aspartate to form carbamoyl aspartate and inorganic phosphate, the committed step in the de novo pyrimidine nucleotide biosynthesis pathway. The polypeptide is Aspartate carbamoyltransferase catalytic subunit (Streptomyces avermitilis (strain ATCC 31267 / DSM 46492 / JCM 5070 / NBRC 14893 / NCIMB 12804 / NRRL 8165 / MA-4680)).